Consider the following 466-residue polypeptide: Asparagine--tRNA ligase (466 aa).

It belongs to the class-II aminoacyl-tRNA synthetase family. As to quaternary structure, homodimer.

It is found in the cytoplasm. It carries out the reaction tRNA(Asn) + L-asparagine + ATP = L-asparaginyl-tRNA(Asn) + AMP + diphosphate + H(+). The chain is Asparagine--tRNA ligase from Pectobacterium atrosepticum (strain SCRI 1043 / ATCC BAA-672) (Erwinia carotovora subsp. atroseptica).